The primary structure comprises 183 residues: Apo-citrate lyase phosphoribosyl-dephospho-CoA transferase (183 aa).

This sequence belongs to the CitX family.

It catalyses the reaction apo-[citrate lyase ACP] + 2'-(5''-triphospho-alpha-D-ribosyl)-3'-dephospho-CoA = holo-[citrate lyase ACP] + diphosphate. In terms of biological role, transfers 2-(5''-triphosphoribosyl)-3'-dephosphocoenzyme-A on a serine residue to the apo-acyl carrier protein (gamma chain) of the citrate lyase to yield holo-acyl carrier protein. The protein is Apo-citrate lyase phosphoribosyl-dephospho-CoA transferase of Escherichia coli O45:K1 (strain S88 / ExPEC).